A 281-amino-acid polypeptide reads, in one-letter code: Putative thiosulfate sulfurtransferase (281 aa).

Rhodanese domains follow at residues 18–125 (NTDG…ELTK) and 154–274 (AIGN…VPIE). Residue C233 is the Cysteine persulfide intermediate of the active site. R238 provides a ligand contact to substrate.

The enzyme catalyses thiosulfate + hydrogen cyanide = thiocyanate + sulfite + 2 H(+). Its function is as follows. May be a sulfotransferase involved in the formation of thiosulfate. The polypeptide is Putative thiosulfate sulfurtransferase (cysA) (Saccharopolyspora erythraea (Streptomyces erythraeus)).